The sequence spans 381 residues: Actin-binding Rho-activating protein (381 aa).

2 disordered regions span residues 39–156 (ENSI…SHGS) and 179–207 (QEEP…PEQD). Residues 69 to 79 (PTSHQKAQSAP) show a composition bias toward polar residues. The segment covering 97–110 (KAPEVSHIKKKEVS) has biased composition (basic and acidic residues). A phosphoserine mark is found at Ser-156 and Ser-188. The segment covering 179-188 (QEEPTWRSDS) has biased composition (basic and acidic residues). Actin-binding stretches follow at residues 199–299 (EAEE…AERA) and 300–381 (KRAE…TLLK). Interaction with actin stretches follow at residues 240–285 (SPVG…GDEG) and 352–381 (MRAR…TLLK).

As to quaternary structure, binds F-actin and ABLIM1, ABLIM2 and ABLIM3. Interaction with ABLIM2 and ABLIM3 enhances activity.

It is found in the cytoplasm. The protein localises to the myofibril. It localises to the sarcomere. The protein resides in the cytoskeleton. Functionally, acts as an activator of serum response factor (SRF)-dependent transcription possibly by inducing nuclear translocation of MKL1 or MKL2 and through a mechanism requiring Rho-actin signaling. This is Actin-binding Rho-activating protein from Homo sapiens (Human).